Consider the following 559-residue polypeptide: Protochlorophyllide-dependent translocon component 52, chloroplastic (559 aa).

Residues 1-55 constitute a chloroplast transit peptide; it reads MEAALAACALPSLRILNTKPRFRCSFSNPSLPISPNSLITRKSSRFTTAVSSPPS. Residues 44–70 form a disordered region; that stretch reads SRFTTAVSSPPSSSAATSTNSPPEPEA. Residues 47 to 64 show a composition bias toward low complexity; sequence TTAVSSPPSSSAATSTNS. Positions 85–195 constitute a Rieske domain; the sequence is WYPVMPICDL…STVQHEIIWF (111 aa). Residues Cys127, His129, Cys147, and His150 each contribute to the [2Fe-2S] cluster site. His248 and His253 together coordinate Fe cation. A Redox-active motif motif is present at residues 483–486; the sequence is CSSC. A run of 2 helical transmembrane segments spans residues 493–513 and 525–545; these read LNAL…VMAV and IAVL…SHFI.

The cofactor is [2Fe-2S] cluster.

The protein resides in the plastid. Its subcellular location is the chloroplast inner membrane. It carries out the reaction protochlorophyllide a + 4 reduced [2Fe-2S]-[ferredoxin] + 2 O2 + 5 H(+) = protochlorophyllide b + 4 oxidized [2Fe-2S]-[ferredoxin] + 3 H2O. Down-regulated by light. Functionally, part of a translocon most abundantly expressed in etiolated plants and involved in the protochlorophyllide-dependent import of the precursor NADPH:protochlorophyllide oxidoreductase A (pPORA). The polypeptide is Protochlorophyllide-dependent translocon component 52, chloroplastic (Arabidopsis thaliana (Mouse-ear cress)).